We begin with the raw amino-acid sequence, 554 residues long: MNIIDQVKQTLIEEITASVKAAGLAEEVPEVKVEIPKDPKNGDYSTNIAMVLTKIAKRNPHEIAQAIVDHLDKSKANVEKIEIAGPGFINFYLNNQYLTAVIPEALEKDKDFGRNEDPKHQKVLVEYVSANPTGDLHIGHARNAAVGDTLSNILDAAGYDVTREYYINDAGNQITNLAHSIEARYDQAMGKETELPADGYYGKDIINIGKDLAEKRPELKDLPEDERLKVFRQLGVDYEMEKLKKDLADFNTHFDGWFSETTLYDKGEIKKVLELMKENGYTYEADGATWLRTTDFNDDKDRVIIKKDGSYTYFLPDVAYHYDKFHRDGGQDILINLFGADHHGYINRLKASVETYGIDADRLEIQIMQMVRLMQDGEEVKMSKRTGNAITLREIMDEVGIDAARYFLTMRSPDTHFDFDMELAKENSAENPVYYAQYAHARISSILKQAGERGITPSENADFSVITNDKAIDLLKKVAEFEPMIESAAEHRAPHRVTNYIQELASAFHKFYNADKVLTDDEKKTQAYVSMIAAVQITLRNALALVGVSAPHNM.

Residues 130 to 140 (ANPTGDLHIGH) carry the 'HIGH' region motif.

This sequence belongs to the class-I aminoacyl-tRNA synthetase family. Monomer.

Its subcellular location is the cytoplasm. It catalyses the reaction tRNA(Arg) + L-arginine + ATP = L-arginyl-tRNA(Arg) + AMP + diphosphate. The sequence is that of Arginine--tRNA ligase from Staphylococcus carnosus (strain TM300).